Here is a 501-residue protein sequence, read N- to C-terminus: L-arabinose isomerase (501 aa).

Mn(2+) contacts are provided by Glu306, Glu333, His350, and His449.

This sequence belongs to the arabinose isomerase family. The cofactor is Mn(2+).

The enzyme catalyses beta-L-arabinopyranose = L-ribulose. The protein operates within carbohydrate degradation; L-arabinose degradation via L-ribulose; D-xylulose 5-phosphate from L-arabinose (bacterial route): step 1/3. Functionally, catalyzes the conversion of L-arabinose to L-ribulose. This Herpetosiphon aurantiacus (strain ATCC 23779 / DSM 785 / 114-95) protein is L-arabinose isomerase.